We begin with the raw amino-acid sequence, 300 residues long: Protease HtpX homolog (300 aa).

Transmembrane regions (helical) follow at residues 5–25 (IFLLTLTNIAVIFLLTLFISL) and 41–61 (TLFLFSMVVGFTGSFISLAIS). Histidine 146 serves as a coordination point for Zn(2+). Glutamate 147 is an active-site residue. Zn(2+) is bound at residue histidine 150. 2 consecutive transmembrane segments (helical) span residues 161-181 (LLQGVVNTFVVFLSRIIGFFV) and 196-216 (IGFYLGMFISEIVLGLLASII). Glutamate 225 is a binding site for Zn(2+).

The protein belongs to the peptidase M48B family. Zn(2+) is required as a cofactor.

The protein localises to the cell inner membrane. This Methylacidiphilum infernorum (isolate V4) (Methylokorus infernorum (strain V4)) protein is Protease HtpX homolog.